We begin with the raw amino-acid sequence, 82 residues long: Conotoxin Cal30 (82 aa).

The first 19 residues, M1–S19, serve as a signal peptide directing secretion.

Post-translationally, may contain 5 disulfide bonds. In terms of tissue distribution, expressed by the venom duct.

Its subcellular location is the secreted. Its function is as follows. Probable neurotoxin. The sequence is that of Conotoxin Cal30 from Californiconus californicus (California cone).